The sequence spans 429 residues: E3 ubiquitin-protein ligase ZNRF4 (429 aa).

The signal sequence occupies residues 1 to 27; that stretch reads MLRCRPEPLMPRATRVAVAVSLPLSHA. Residues 28 to 250 lie on the Lumenal side of the membrane; sequence VIPTQLPSHP…PPCRDLDCHP (223 aa). The tract at residues 30–64 is disordered; the sequence is PTQLPSHPGHRPSGRPRRCPKAPCLPSPVGLSSTQ. Basic residues predominate over residues 37-49; sequence PGHRPSGRPRRCP. Residue Asn-152 is glycosylated (N-linked (GlcNAc...) asparagine). A PA domain is found at 152 to 223; it reads NRSLGAIALI…VGEAASQDLR (72 aa). A helical membrane pass occupies residues 251–271; sequence VLTVSWALGRTLALVVSTLFV. Residues 272 to 429 are Cytoplasmic-facing; that stretch reads LNRLWLWAQA…SPAPPEAPGQ (158 aa). The segment at 309-352 adopts an RING-type; atypical zinc-finger fold; that stretch reads CAICLDEYEEGDQLKILPCSHTYHCKCIDPWFSQAPRRSCPVCK. 2 disordered regions span residues 358–381 and 409–429; these read TEDSFDSTTDSFSDEDPSLPGHRP and TTSLEAEDTTVSPAPPEAPGQ. Residues 409-420 show a composition bias toward polar residues; sequence TTSLEAEDTTVS.

In terms of assembly, interacts with CANX.

It is found in the endoplasmic reticulum membrane. The enzyme catalyses S-ubiquitinyl-[E2 ubiquitin-conjugating enzyme]-L-cysteine + [acceptor protein]-L-lysine = [E2 ubiquitin-conjugating enzyme]-L-cysteine + N(6)-ubiquitinyl-[acceptor protein]-L-lysine.. Its pathway is protein modification; protein ubiquitination. Functionally, E3 ubiquitin-protein ligase that acts as a negative regulator of NOD2 signaling by mediating ubiquitination and degradation of RIPK2. Also catalyzes ubiquitination and proteasomal degradation of CANX within the endoplasmic reticulum. Could have a role in spermatogenesis. The chain is E3 ubiquitin-protein ligase ZNRF4 (ZNRF4) from Macaca fascicularis (Crab-eating macaque).